Reading from the N-terminus, the 763-residue chain is Probable ubiquitin carboxyl-terminal hydrolase MINDY-4 (763 aa).

Position 143 is a phosphoserine (serine 143). The tract at residues 154–368 (SSKRSSHKSR…SQPASLRKNQ (215 aa)) is disordered. Residues 180–202 (EKTDKLPMSEPSLDTKRMGEKVR) are compositionally biased toward basic and acidic residues. Residues serine 220 and serine 224 each carry the phosphoserine modification. The segment covering 252–261 (ELSTHTSTCP) has biased composition (polar residues). Residues 267 to 278 (PASSTASTSRSP) show a composition bias toward low complexity. Serine 296 carries the phosphoserine modification. Basic and acidic residues predominate over residues 346 to 355 (TQERPERAFE). The span at 357–368 (QGSQPASLRKNQ) shows a compositional bias: polar residues. The active-site Nucleophile is cysteine 463. The Proton acceptor role is filled by histidine 683.

The protein belongs to the MINDY deubiquitinase family. FAM188 subfamily.

The enzyme catalyses Thiol-dependent hydrolysis of ester, thioester, amide, peptide and isopeptide bonds formed by the C-terminal Gly of ubiquitin (a 76-residue protein attached to proteins as an intracellular targeting signal).. Probable hydrolase that can remove 'Lys-48'-linked conjugated ubiquitin from proteins. The protein is Probable ubiquitin carboxyl-terminal hydrolase MINDY-4 (MINDY4) of Bos taurus (Bovine).